We begin with the raw amino-acid sequence, 317 residues long: Melanoma-associated antigen 4 (317 aa).

Residues 1 to 14 show a composition bias toward basic and acidic residues; sequence MSSEQKSQHCKPEE. The interval 1-102 is disordered; the sequence is MSSEQKSQHC…EEGPSTSPDA (102 aa). A compositionally biased stretch (polar residues) spans 66 to 82; that stretch reads PQGASALPTTISFTCWR. The MAGE domain maps to 110–309; that stretch reads LSNKVDELAH…IAYPSLREAA (200 aa).

In terms of tissue distribution, expressed in many tumors of several types, such as melanoma, head and neck squamous cell carcinoma, lung carcinoma and breast carcinoma, but not in normal tissues except for testes and placenta.

Its function is as follows. Regulates cell proliferation through the inhibition of cell cycle arrest at the G1 phase. Also negatively regulates p53-mediated apoptosis. The sequence is that of Melanoma-associated antigen 4 (MAGEA4) from Homo sapiens (Human).